Consider the following 203-residue polypeptide: 8-oxoguanine DNA glycosylase/AP lyase (203 aa).

Catalysis depends on residues K128 and D146.

This sequence belongs to the type-2 OGG1 family.

The catalysed reaction is 2'-deoxyribonucleotide-(2'-deoxyribose 5'-phosphate)-2'-deoxyribonucleotide-DNA = a 3'-end 2'-deoxyribonucleotide-(2,3-dehydro-2,3-deoxyribose 5'-phosphate)-DNA + a 5'-end 5'-phospho-2'-deoxyribonucleoside-DNA + H(+). Catalyzes the excision of an oxidatively damaged form of guanine (7,8-dihydro-8-oxoguanine = 8-oxoG) from DNA. Also cleaves the DNA backbone at apurinic/apyrimidinic sites (AP sites). In Sulfolobus acidocaldarius (strain ATCC 33909 / DSM 639 / JCM 8929 / NBRC 15157 / NCIMB 11770), this protein is 8-oxoguanine DNA glycosylase/AP lyase.